The following is a 1029-amino-acid chain: Putative guanine nucleotide-exchange factor SED4 (1029 aa).

Topologically, residues 1–344 are cytoplasmic; it reads MVFDSEYDLG…AMGGSNLWKS (344 aa). WD repeat units follow at residues 257 to 296 and 300 to 339; these read KDYK…VIKL and VHKD…MGGS. The helical; Signal-anchor for type II membrane protein transmembrane segment at 345 to 365 threads the bilayer; it reads LLRFLFNVMKLAVVVIWAHLF. Residues 366–1029 lie on the Lumenal side of the membrane; sequence YKYDLHHKLY…TQHNVINDEL (664 aa). The N-linked (GlcNAc...) asparagine glycan is linked to N579. The span at 579–592 shows a compositional bias: low complexity; that stretch reads NASTSISIEESTNS. 3 disordered regions span residues 579–673, 710–732, and 747–821; these read NAST…NSIV, VVDE…VGSI, and EAVK…SQIS. Polar residues predominate over residues 593 to 603; the sequence is HSTFIESSSSL. N608 is a glycosylation site (N-linked (GlcNAc...) asparagine). Residues 613-628 are compositionally biased toward basic and acidic residues; sequence SSREISSETSIIKEDM. Residues 633-642 are compositionally biased toward polar residues; sequence ENVSEQSATD. 2 N-linked (GlcNAc...) asparagine glycosylation sites follow: N634 and N647. The segment covering 643 to 654 has biased composition (basic and acidic residues); that stretch reads KVNKNQSIDKID. A compositionally biased stretch (low complexity) spans 655-672; that stretch reads VSSSSSIPTSSEGSSNSI. Over residues 712 to 722 the composition is skewed to basic and acidic residues; it reads DENHSESKLPT. N-linked (GlcNAc...) asparagine glycans are attached at residues N714, N754, N774, N792, N806, N855, N865, N874, N884, and N966. Composition is skewed to polar residues over residues 750 to 762 and 771 to 782; these read KTSS…SQVT and RVSNQSLSTVST. Residues 783-799 show a composition bias toward basic and acidic residues; the sequence is EHTEMKESSNLTEKKPE. Over residues 800–812 the composition is skewed to low complexity; that stretch reads SNSPESNLSESSL. The span at 858-867 shows a compositional bias: low complexity; the sequence is LVDSQSSNSS. 3 disordered regions span residues 858 to 886, 963 to 982, and 1003 to 1029; these read LVDS…QNET, TPEN…FMTE, and VAQQ…NDEL. Polar residues predominate over residues 868–886; it reads VKTVETNVSQDEQTSQNET. The short motif at 1026–1029 is the Prevents secretion from ER element; sequence NDEL.

Belongs to the WD repeat SEC12 family.

The protein resides in the endoplasmic reticulum membrane. It localises to the golgi apparatus membrane. In terms of biological role, putative guanine nucleotide-exchange factor (GEF) involved in the formation or budding of transport vesicles from the ER. Positive regulator of SAR1 probably through inhibition of the GTPase activation by SEC23. In Candida glabrata (strain ATCC 2001 / BCRC 20586 / JCM 3761 / NBRC 0622 / NRRL Y-65 / CBS 138) (Yeast), this protein is Putative guanine nucleotide-exchange factor SED4 (SED4).